The following is a 342-amino-acid chain: Glycerol-1-phosphate dehydrogenase [NAD(P)+] (342 aa).

NAD(+) is bound by residues 84-88 (GRPLD) and 106-109 (TSAS). Aspartate 111 provides a ligand contact to substrate. Position 115 (serine 115) interacts with NAD(+). Aspartate 160 serves as a coordination point for substrate. Zn(2+) contacts are provided by aspartate 160 and histidine 241. Histidine 245 is a substrate binding site. Histidine 260 is a binding site for Zn(2+).

The protein belongs to the glycerol-1-phosphate dehydrogenase family. As to quaternary structure, homodimer. It depends on Zn(2+) as a cofactor.

Its subcellular location is the cytoplasm. The enzyme catalyses sn-glycerol 1-phosphate + NAD(+) = dihydroxyacetone phosphate + NADH + H(+). The catalysed reaction is sn-glycerol 1-phosphate + NADP(+) = dihydroxyacetone phosphate + NADPH + H(+). Its pathway is membrane lipid metabolism; glycerophospholipid metabolism. Catalyzes the NAD(P)H-dependent reduction of dihydroxyacetonephosphate (DHAP or glycerone phosphate) to glycerol 1-phosphate (G1P). The G1P thus generated is used as the glycerophosphate backbone of phospholipids in the cellular membranes of Archaea. The polypeptide is Glycerol-1-phosphate dehydrogenase [NAD(P)+] (Pyrobaculum neutrophilum (strain DSM 2338 / JCM 9278 / NBRC 100436 / V24Sta) (Thermoproteus neutrophilus)).